We begin with the raw amino-acid sequence, 377 residues long: Nitric oxide reductase FlRd-NAD(+) reductase (377 aa).

This sequence belongs to the FAD-dependent oxidoreductase family. The cofactor is FAD.

It is found in the cytoplasm. It carries out the reaction 2 reduced [nitric oxide reductase rubredoxin domain] + NAD(+) + H(+) = 2 oxidized [nitric oxide reductase rubredoxin domain] + NADH. Its pathway is nitrogen metabolism; nitric oxide reduction. In terms of biological role, one of at least two accessory proteins for anaerobic nitric oxide (NO) reductase. Reduces the rubredoxin moiety of NO reductase. This is Nitric oxide reductase FlRd-NAD(+) reductase from Salmonella arizonae (strain ATCC BAA-731 / CDC346-86 / RSK2980).